The following is a 437-amino-acid chain: Phosphomethylpyrimidine synthase (437 aa).

Substrate contacts are provided by residues asparagine 69, methionine 98, tyrosine 127, histidine 163, 185-187 (SRG), 226-229 (DALR), and glutamate 265. Histidine 269 is a Zn(2+) binding site. Tyrosine 292 contributes to the substrate binding site. Residue histidine 333 coordinates Zn(2+). [4Fe-4S] cluster contacts are provided by cysteine 409, cysteine 412, and cysteine 416.

Belongs to the ThiC family. The cofactor is [4Fe-4S] cluster.

The catalysed reaction is 5-amino-1-(5-phospho-beta-D-ribosyl)imidazole + S-adenosyl-L-methionine = 4-amino-2-methyl-5-(phosphooxymethyl)pyrimidine + CO + 5'-deoxyadenosine + formate + L-methionine + 3 H(+). The protein operates within cofactor biosynthesis; thiamine diphosphate biosynthesis. In terms of biological role, catalyzes the synthesis of the hydroxymethylpyrimidine phosphate (HMP-P) moiety of thiamine from aminoimidazole ribotide (AIR) in a radical S-adenosyl-L-methionine (SAM)-dependent reaction. The polypeptide is Phosphomethylpyrimidine synthase (Alkaliphilus oremlandii (strain OhILAs) (Clostridium oremlandii (strain OhILAs))).